A 508-amino-acid chain; its full sequence is Photosystem II CP47 reaction center protein (508 aa).

The next 6 membrane-spanning stretches (helical) occupy residues 21-36 (SVHI…WAGS), 101-115 (IVFS…IWHW), 140-156 (GIHL…FGAF), 203-218 (IAAG…FHLS), 237-252 (VLSS…AFVV), and 457-472 (SFAL…HGAR).

It belongs to the PsbB/PsbC family. PsbB subfamily. In terms of assembly, PSII is composed of 1 copy each of membrane proteins PsbA, PsbB, PsbC, PsbD, PsbE, PsbF, PsbH, PsbI, PsbJ, PsbK, PsbL, PsbM, PsbT, PsbX, PsbY, PsbZ, Psb30/Ycf12, at least 3 peripheral proteins of the oxygen-evolving complex and a large number of cofactors. It forms dimeric complexes. It depends on Binds multiple chlorophylls. PSII binds additional chlorophylls, carotenoids and specific lipids. as a cofactor.

It localises to the plastid. Its subcellular location is the chloroplast thylakoid membrane. One of the components of the core complex of photosystem II (PSII). It binds chlorophyll and helps catalyze the primary light-induced photochemical processes of PSII. PSII is a light-driven water:plastoquinone oxidoreductase, using light energy to abstract electrons from H(2)O, generating O(2) and a proton gradient subsequently used for ATP formation. The sequence is that of Photosystem II CP47 reaction center protein from Platanus occidentalis (Sycamore).